Here is a 274-residue protein sequence, read N- to C-terminus: MLKLLLLLALSPLASLVHAAPCPVKQRVGIVGGREASESKWPWQVSLRFKFSFWMHFCGGSLIHPQWVLTAAHCVGLHIKSPELFRVQLREQYLYYADQLLTVNRTVVHPHYYTVEDGADIALLELEIPVNVSTHIHPISLPPASETFPSGTSCWVTGWGDIDSDEPLLPPYPLKQVKVPIVENSLCDRKYHTGLYTGDDVPIVQDGMLCAGNTRSDSCQGDSGGPLVCKVKGTWLQAGVVSWGEGCAEANRPGIYTRVTYYLDWIHRYVPQRS.

A signal peptide spans 1 to 19; sequence MLKLLLLLALSPLASLVHA. A propeptide spans 20–29 (activation peptide); it reads APCPVKQRVG. Residues 30-271 form the Peptidase S1 domain; sequence IVGGREASES…YLDWIHRYVP (242 aa). Cys-58 and Cys-74 are disulfide-bonded. His-73 serves as the catalytic Charge relay system. Tyr-96 bears the Phosphotyrosine mark. N-linked (GlcNAc...) asparagine glycosylation occurs at Asn-104. Asp-120 acts as the Charge relay system in catalysis. Asn-131 carries N-linked (GlcNAc...) asparagine glycosylation. Cystine bridges form between Cys-154-Cys-229, Cys-187-Cys-210, and Cys-219-Cys-247. The Charge relay system role is filled by Ser-223.

This sequence belongs to the peptidase S1 family. Tryptase subfamily. Homotetramer. The active tetramer is converted to inactive monomers at neutral and acidic pH in the absence of heparin. Low concentrations of inactive monomers become active monomers at pH 6.0 in the presence of heparin. When the concentration of active monomers is higher, they convert to active monomers and then to active tetramers. These monomers are active and functionally distinct from the tetrameric enzyme. In contrast to the hidden active sites in the tetrameric form, the active site of the monomeric form is accessible for macromolecular proteins and inhibitors, e.g. fibrinogen which is a substrate for the monomeric but not for the tetrameric form. The monomeric form forms a complex with SERPINB6.

The protein resides in the secreted. The enzyme catalyses Preferential cleavage: Arg-|-Xaa, Lys-|-Xaa, but with more restricted specificity than trypsin.. Functionally, tryptase is the major neutral protease present in mast cells and is secreted upon the coupled activation-degranulation response of this cell type. Plays a role in innate immunity. The polypeptide is Tryptase beta-2 (Tpsb2) (Rattus norvegicus (Rat)).